The sequence spans 419 residues: Peroxisomal membrane protein PMP47B (419 aa).

Solcar repeat units lie at residues 6 to 120, 142 to 230, and 239 to 369; these read YDDL…TGKT, LSVW…LKSF, and VTPV…LLIL. Residues 12 to 32 traverse the membrane as a helical segment; it reads AFAGAGGGLLSMTLTYPLVTL. Basic and acidic residues predominate over residues 44–53; the sequence is KNEEEEKENS. The interval 44–69 is disordered; that stretch reads KNEEEEKENSNEDGSLSPKSSNTSNI. The segment covering 56–69 has biased composition (polar residues); sequence DGSLSPKSSNTSNI. Transmembrane regions (helical) follow at residues 98–118, 204–224, and 245–265; these read SALFGIAVTNFVYYYFYELTG, FTGIVPALFLVLNPIIQYTIF, and LLLGAFGKLIATIITYPYITL. The disordered stretch occupies residues 274–305; it reads MTENNEDSEKERTDSVQSLPEDGSDEDNSKEN. Helical transmembrane passes span 310–330 and 349–369; these read TINKIISKLPSPIVSMFIIGY and LLQSILNAAFLFYFKEELLIL.

Belongs to the mitochondrial carrier (TC 2.A.29) family.

It localises to the peroxisome membrane. May have transport activity. The sequence is that of Peroxisomal membrane protein PMP47B (PMP47B) from Candida boidinii (Yeast).